We begin with the raw amino-acid sequence, 211 residues long: Large ribosomal subunit protein uL3 (211 aa).

Glutamine 150 is subject to N5-methylglutamine.

It belongs to the universal ribosomal protein uL3 family. As to quaternary structure, part of the 50S ribosomal subunit. Forms a cluster with proteins L14 and L19. Methylated by PrmB.

Functionally, one of the primary rRNA binding proteins, it binds directly near the 3'-end of the 23S rRNA, where it nucleates assembly of the 50S subunit. The sequence is that of Large ribosomal subunit protein uL3 from Pseudomonas savastanoi pv. phaseolicola (strain 1448A / Race 6) (Pseudomonas syringae pv. phaseolicola (strain 1448A / Race 6)).